The chain runs to 71 residues: UPF0337 protein RPA4418 (71 aa).

Residues 1–54 form a disordered region; that stretch reads MGSTMDKIKGQANELAGKAKQGIGEATGSDKLKGEGAIQEAKGHGQQALGNAKD.

Belongs to the UPF0337 (CsbD) family.

In Rhodopseudomonas palustris (strain ATCC BAA-98 / CGA009), this protein is UPF0337 protein RPA4418.